The sequence spans 166 residues: Phosphopantetheine adenylyltransferase (166 aa).

Serine 10 serves as a coordination point for substrate. ATP is bound by residues 10–11 and histidine 18; that span reads SF. Residues lysine 42, alanine 79, and arginine 93 each contribute to the substrate site. Residues 94–96, glutamate 104, and 129–135 each bind ATP; these read GLR and VRPITAT.

It belongs to the bacterial CoaD family. Homohexamer. It depends on Mg(2+) as a cofactor.

Its subcellular location is the cytoplasm. The catalysed reaction is (R)-4'-phosphopantetheine + ATP + H(+) = 3'-dephospho-CoA + diphosphate. The protein operates within cofactor biosynthesis; coenzyme A biosynthesis; CoA from (R)-pantothenate: step 4/5. In terms of biological role, reversibly transfers an adenylyl group from ATP to 4'-phosphopantetheine, yielding dephospho-CoA (dPCoA) and pyrophosphate. The sequence is that of Phosphopantetheine adenylyltransferase from Methylobacterium nodulans (strain LMG 21967 / CNCM I-2342 / ORS 2060).